Here is a 535-residue protein sequence, read N- to C-terminus: Triacylglyceride transporter MHAS_02168/C731_2106 (535 aa).

The Cytoplasmic segment spans residues 1–18 (MAFPQTPNRLIRPRRTSR). A helical membrane pass occupies residues 19–39 (GIAISAGGLAVLLGALDTYVV). Topologically, residues 40 to 60 (VSIVTDIMRDVGIAVNQIQRV) are periplasmic. A helical transmembrane segment spans residues 61-82 (TPIITGYLLGYIAAMPLLGRAS). The Cytoplasmic portion of the chain corresponds to 83-86 (DRFG). The helical transmembrane segment at 87 to 107 (RKLLIQISLAGFALGSVITAL) threads the bilayer. Residues 108–111 (ATNL) lie on the Periplasmic side of the membrane. A helical membrane pass occupies residues 112 to 136 (DVLVAGRVIQGAASGALLPVTLALA). Topologically, residues 137 to 145 (ADLWATHKR) are cytoplasmic. The helical transmembrane segment at 146–167 (AAVLGGVGAAQELGAVLGPIYG) threads the bilayer. Residues 168–177 (IFVVWLFHHW) lie on the Periplasmic side of the membrane. A helical transmembrane segment spans residues 178 to 198 (QAVFWVNVPLALIAMVLIHIS). Residues 199-212 (LPPRVRTEEPQRVD) lie on the Cytoplasmic side of the membrane. Residues 213-230 (VTGGLLLALALGLATIGL) form a helical membrane-spanning segment. Topologically, residues 231-243 (YNAEPDGKQVLPE) are periplasmic. A helical transmembrane segment spans residues 244–263 (YGPPLIIGAVIAAVAFLVWE). Over 264–278 (RFARTRLLDPAGVRF) the chain is Cytoplasmic. Residues 279-300 (RPFLIALLVSLVTGGALMVTLV) traverse the membrane as a helical segment. At 301–320 (NVELFGQGVLGLDQDEAVFL) the chain is on the periplasmic side. 2 helical membrane passes run 321–343 (LARF…TRVG) and 344–364 (DRAV…LIAQ). Residues 365 to 384 (WPADVLESRHDLGFVSLPTL) lie on the Periplasmic side of the membrane. The interval 373–382 (RHDLGFVSLP) is beta-hairpin. A helical transmembrane segment spans residues 385 to 407 (DTDLAIAGFGLGLVIAPLTSAAL). At 408-415 (RVVPAAQH) the chain is on the cytoplasmic side. A helical membrane pass occupies residues 416-440 (GIASAAVVVARMIGMLIGIAALSAW). Residues 441 to 487 (GLYRFNQYLKEQLAALPPAPADFPGGQMAGQMMRLRTATVQAYVLQY) lie on the Periplasmic side of the membrane. A helical transmembrane segment spans residues 488-507 (GEIFAITAGLCVFGAVLGLF). Over 508 to 535 (IAGRREHAEESADAVDGVSNARDRAPSA) the chain is Cytoplasmic.

The protein belongs to the major facilitator superfamily. P55 (TC 2.A.1.3.34) family.

It localises to the cell inner membrane. Its function is as follows. In association with lipoprotein LprG transports triacylglycerides (TAG) across the inner cell membrane, probably transfering them to lipoprotein LprG in the periplasm. TAG probably regulates lipid metabolism and growth regulation and plays a structural role in the outer membrane. Mutagenesis and molecular modeling suggests TAG (and maybe other lipids) enters the central cavity of the P55 transporter from within the cell inner membrane via clefts on the cytoplasmic face of P55 between TM5-TM8 and TM2-TM11. From there the lipid is probably transferred to the hydrophobic cavity of LprG. The lprG-MHAS_02167/C731_2107 operon complements the vancomycin sensitivity of an M.smegmatis knockout of the same operon. Probably required with LprG for normal surface localization of lipoarabinomannan (LAM). In Mycolicibacterium hassiacum (strain DSM 44199 / CIP 105218 / JCM 12690 / 3849) (Mycobacterium hassiacum), this protein is Triacylglyceride transporter MHAS_02168/C731_2106.